The chain runs to 79 residues: MKTLLLTLVMVTIMCLDLGYTLTCYKGYHDTVVCKPHETICYEYFIPATHGNVITTRGCSTSCPGGIRPVCCSTDLCNN.

Residues 1-21 (MKTLLLTLVMVTIMCLDLGYT) form the signal peptide. 4 cysteine pairs are disulfide-bonded: cysteine 24–cysteine 41, cysteine 34–cysteine 59, cysteine 63–cysteine 71, and cysteine 72–cysteine 77.

It belongs to the three-finger toxin family. Short-chain subfamily. Type III alpha-neurotoxin sub-subfamily. As to expression, expressed by the venom gland.

It localises to the secreted. In terms of biological role, binds with high affinity to muscle nicotinic acetylcholine receptor (nAChR) and hinders acetylcholine binding to the receptor, thereby impairing neuromuscular transmission. Causes muscle paralysis, spasms and increased respiration. The polypeptide is Short neurotoxin 8 (Pseudonaja textilis (Eastern brown snake)).